The following is a 472-amino-acid chain: Poly(A) polymerase catalytic subunit (472 aa).

Active-site residues include aspartate 194 and aspartate 196.

This sequence belongs to the poxviridae poly(A) polymerase catalytic subunit family. As to quaternary structure, heterodimer of a large (catalytic) subunit and a small (regulatory) subunit.

The catalysed reaction is RNA(n) + ATP = RNA(n)-3'-adenine ribonucleotide + diphosphate. Polymerase that creates the 3'-poly(A) tail of mRNA's. This is Poly(A) polymerase catalytic subunit (PAPL) from Serinus (CNPV).